Reading from the N-terminus, the 146-residue chain is DNA-binding protein Rv2175c (146 aa).

Positions 1 to 27 are disordered; the sequence is MPGRAPGSTLARVGSIPAGDDVLDPDE. Residue Thr-9 is modified to Phosphothreonine.

In terms of assembly, monomer in solution. May form homodimers. Interacts with phosphorylated PknL. In terms of processing, phosphorylated by PknL. Phosphorylation negatively regulates DNA-binding activity.

Binds DNA at low salt concentrations. The chain is DNA-binding protein Rv2175c from Mycobacterium tuberculosis (strain ATCC 25618 / H37Rv).